A 425-amino-acid chain; its full sequence is Diacetylchitobiose binding protein DasA (425 aa).

Residues 1 to 20 (MKRKLIAAIGIAGMMVSIAA) form the signal peptide. Residue Cys21 is the site of N-palmitoyl cysteine attachment. Cys21 carries S-diacylglycerol cysteine lipidation.

It belongs to the bacterial solute-binding protein 1 family. As to quaternary structure, the complex is composed of two ATP-binding proteins (MsiK), two transmembrane proteins (DasB and DasC) and a solute-binding protein (DasA).

Its subcellular location is the cell membrane. Part of the ABC transporter complex DasABC-MsiK involved in N,N'-diacetylchitobiose ((GlcNAc)2) uptake. Binds specifically to (GlcNAc)2. Can also bind to GlcNAc, (GlcNAc)3, (GlcNAc)4 and (GlcNAc)5, but it exhibits the highest affinity for (GlcNAc)2. Involved in the control of morphological differentiation. The chain is Diacetylchitobiose binding protein DasA from Streptomyces coelicolor (strain ATCC BAA-471 / A3(2) / M145).